The following is a 186-amino-acid chain: ATP synthase subunit delta (186 aa).

This sequence belongs to the ATPase delta chain family. In terms of assembly, F-type ATPases have 2 components, F(1) - the catalytic core - and F(0) - the membrane proton channel. F(1) has five subunits: alpha(3), beta(3), gamma(1), delta(1), epsilon(1). F(0) has three main subunits: a(1), b(2) and c(10-14). The alpha and beta chains form an alternating ring which encloses part of the gamma chain. F(1) is attached to F(0) by a central stalk formed by the gamma and epsilon chains, while a peripheral stalk is formed by the delta and b chains.

The protein localises to the cell inner membrane. Functionally, f(1)F(0) ATP synthase produces ATP from ADP in the presence of a proton or sodium gradient. F-type ATPases consist of two structural domains, F(1) containing the extramembraneous catalytic core and F(0) containing the membrane proton channel, linked together by a central stalk and a peripheral stalk. During catalysis, ATP synthesis in the catalytic domain of F(1) is coupled via a rotary mechanism of the central stalk subunits to proton translocation. This protein is part of the stalk that links CF(0) to CF(1). It either transmits conformational changes from CF(0) to CF(1) or is implicated in proton conduction. This is ATP synthase subunit delta from Bacteroides thetaiotaomicron (strain ATCC 29148 / DSM 2079 / JCM 5827 / CCUG 10774 / NCTC 10582 / VPI-5482 / E50).